An 843-amino-acid polypeptide reads, in one-letter code: Beta-mannosidase B (843 aa).

E432 functions as the Proton donor in the catalytic mechanism.

It belongs to the glycosyl hydrolase 2 family. Beta-mannosidase B subfamily.

The enzyme catalyses Hydrolysis of terminal, non-reducing beta-D-mannose residues in beta-D-mannosides.. The protein operates within glycan metabolism; N-glycan degradation. In terms of biological role, exoglycosidase that cleaves the single beta-linked mannose residue from the non-reducing end of beta-mannosidic oligosaccharides of various complexity and length. Prefers mannobiose over mannotriose and has no activity against polymeric mannan. Is also severely restricted by galactosyl substitutions at the +1 subsite. Releases the terminal mannose residue from mannobiose, mannotriose and galactosyl-mannotriose (GM3), but not from galactosyl-mannobiose (GM2) or di-galactosyl-mannopentaose (G2M5). The sequence is that of Beta-mannosidase B (mndB) from Emericella nidulans (strain FGSC A4 / ATCC 38163 / CBS 112.46 / NRRL 194 / M139) (Aspergillus nidulans).